The primary structure comprises 359 residues: Phospho-N-acetylmuramoyl-pentapeptide-transferase (359 aa).

10 helical membrane passes run 3 to 23, 55 to 75, 84 to 104, 117 to 137, 156 to 176, 187 to 207, 231 to 251, 255 to 275, 280 to 300, and 334 to 354; these read QIIIAAGIAILVSIMLTPVLI, VAILAGMWAGYFGSHLVGIAF, GLLVLALATMLGGVGFIDDFI, TSKTVGQILSALVFGVLVLQF, IATVAMPAAIFVLFCVILVMS, LDGLAGGCMAMVTGAYVIVTF, LAVIAAATAGACIGFLWWNAA, IFMGDTGSLALGGVIAGLSVT, LLAVVLGALFVAEIVSVVLQI, and FWLLTAIACGLGLALFYGEWL.

The protein belongs to the glycosyltransferase 4 family. MraY subfamily. The cofactor is Mg(2+).

It localises to the cell membrane. The enzyme catalyses UDP-N-acetyl-alpha-D-muramoyl-L-alanyl-gamma-D-glutamyl-meso-2,6-diaminopimeloyl-D-alanyl-D-alanine + di-trans,octa-cis-undecaprenyl phosphate = di-trans,octa-cis-undecaprenyl diphospho-N-acetyl-alpha-D-muramoyl-L-alanyl-D-glutamyl-meso-2,6-diaminopimeloyl-D-alanyl-D-alanine + UMP. It functions in the pathway cell wall biogenesis; peptidoglycan biosynthesis. Functionally, catalyzes the initial step of the lipid cycle reactions in the biosynthesis of the cell wall peptidoglycan: transfers peptidoglycan precursor phospho-MurNAc-pentapeptide from UDP-MurNAc-pentapeptide onto the lipid carrier undecaprenyl phosphate, yielding undecaprenyl-pyrophosphoryl-MurNAc-pentapeptide, known as lipid I. The chain is Phospho-N-acetylmuramoyl-pentapeptide-transferase from Mycobacteroides abscessus (strain ATCC 19977 / DSM 44196 / CCUG 20993 / CIP 104536 / JCM 13569 / NCTC 13031 / TMC 1543 / L948) (Mycobacterium abscessus).